We begin with the raw amino-acid sequence, 1036 residues long: Protein translocase subunit SecA, chloroplastic (1036 aa).

The N-terminal 76 residues, 1–76 (MESCARSASQ…KIGELMQVRA (76 aa)), are a transit peptide targeting the chloroplast. 186–193 (MRTGEGKT) is an ATP binding site. Residues 995–1036 (NQEQQQKGKPDSSNVENKRIGDANLNPVSVTESPSSDSPQNT) form a disordered region. Basic and acidic residues predominate over residues 1000 to 1015 (QKGKPDSSNVENKRIG). Residues 1020 to 1036 (NPVSVTESPSSDSPQNT) are compositionally biased toward polar residues.

This sequence belongs to the SecA family.

It localises to the plastid. It is found in the chloroplast stroma. The protein resides in the chloroplast thylakoid membrane. The enzyme catalyses ATP + H2O + chloroplast-proteinSide 1 = ADP + phosphate + chloroplast-proteinSide 2.. Has a central role in coupling the hydrolysis of ATP to the transfer of proteins across the thylakoid membrane. In Spinacia oleracea (Spinach), this protein is Protein translocase subunit SecA, chloroplastic.